An 823-amino-acid chain; its full sequence is MGKNSLKRALELDVVDFAEHTSAHGIPRAYVSTGWRRYMWLLCFLFCLSCFGHQAYLIVERFNRNDIIVGVEIKFEEIKFPAVTICNMNPYKNSAARELGAIRNAIEAFELAIDKSDGNAHSKRKKRSANSKMVPIDLLCKEEHGMFTAHDYGHVECTCVTFEDMSKVGDTDDDEIFWNCHQRKDWTHKICHLAEGSNQLKTCKCFEDTCVSDEVTKQLVWPLQLSKNGTKLCISPESSGPRYCASAQKFQVSTCSNCDWLGKCEESDDMDLEEEIDSKTCICHHGNCFQIKGNVKKRKRRTPERKVHERLLSRYEGLLAVYSHCNCTKQHGCVSTSVPDMDLENSNKTCLCFYNKKNEQIWPCYKEPEWEERKCSRCNTMGDCVYSDKPKKQTISCLCATPIKMCVRIDPPQTNDTSLDDRVVKFWDIQPSTTMSPIVKKKEERDKAYGYTGVKDRIALRAKAMENMIFAVDALTEEEKWKISYNKSDFIMKCSFNGRECNVKHDFVEYLDPTYGACFTYGQKLGNNTNERSGPAYGLRLEVFVNVTEYLPTTEAAGVRLTVHATDEQPFPDTLGFSAPTGFVSSFGIKLKSMVRLPAPYGDCVREGKTEDFIYTQKAYNTEGCQRSCIQKHLSKTCGCGDPRFPPYRESKNCPVDDPYKRECIKNEMHVATRDSKKLGCSCKQPCNQDVYSVSYSASRWPAIAGDLSGCPLGMAAHHCLNYKREQGSMIEVYFEQLNYESLLESEAYGWSNLLSDFGGQLGLWMGVSVITIGEVACFFFEVFISLISSNRTKRRPARKSFSSSLRCSTDYNLNKDGFNLDN.

At 1-38 (MGKNSLKRALELDVVDFAEHTSAHGIPRAYVSTGWRRY) the chain is on the cytoplasmic side. The chain crosses the membrane as a helical span at residues 39–59 (MWLLCFLFCLSCFGHQAYLIV). At 60-767 (ERFNRNDIIV…FGGQLGLWMG (708 aa)) the chain is on the extracellular side. 2 cysteine pairs are disulfide-bonded: cysteine 86-cysteine 518 and cysteine 494-cysteine 501. Residues asparagine 228, asparagine 326, asparagine 347, asparagine 415, and asparagine 486 are each glycosylated (N-linked (GlcNAc...) asparagine). N-linked (GlcNAc...) asparagine glycans are attached at residues asparagine 527 and asparagine 546. Cystine bridges form between cysteine 604-cysteine 687, cysteine 625-cysteine 683, cysteine 629-cysteine 681, and cysteine 638-cysteine 664. The short motif at 767–769 (GVS) is the GAS motif; ion selectivity filter element. Residues 768–788 (VSVITIGEVACFFFEVFISLI) traverse the membrane as a helical segment. The Cytoplasmic segment spans residues 789-795 (SSNRTKR).

Belongs to the amiloride-sensitive sodium channel (TC 1.A.6) family. Homotrimer. Heterotrimer; with other ASIC proteins producing channel with different properties.

It is found in the cell membrane. The protein resides in the postsynaptic cell membrane. It localises to the cell projection. Its subcellular location is the dendrite. The catalysed reaction is Na(+)(in) = Na(+)(out). The enzyme catalyses K(+)(in) = K(+)(out). It carries out the reaction Li(+)(in) = Li(+)(out). It catalyses the reaction Ca(2+)(in) = Ca(2+)(out). Functionally, forms voltage-independent, pH-gated trimeric sodium channels that act as postsynaptic excitatory receptors in the nervous system, playing a crucial role in regulating synaptic plasticity, learning, and memory. Promotes synaptic vesicle fusion to positively regulate the release of dopamine at dopaminergic neuron synapses. Displays high selectivity for sodium ions but can also permit the permeation of other cations. The polypeptide is Degenerin-like protein asic-1 (Caenorhabditis elegans).